We begin with the raw amino-acid sequence, 264 residues long: Phosphatidylserine decarboxylase proenzyme (264 aa).

Active-site charge relay system; for autoendoproteolytic cleavage activity residues include aspartate 86, histidine 142, and serine 226. The active-site Schiff-base intermediate with substrate; via pyruvic acid; for decarboxylase activity is serine 226. Serine 226 carries the post-translational modification Pyruvic acid (Ser); by autocatalysis.

It belongs to the phosphatidylserine decarboxylase family. PSD-B subfamily. Prokaryotic type I sub-subfamily. Heterodimer of a large membrane-associated beta subunit and a small pyruvoyl-containing alpha subunit. Pyruvate serves as cofactor. In terms of processing, is synthesized initially as an inactive proenzyme. Formation of the active enzyme involves a self-maturation process in which the active site pyruvoyl group is generated from an internal serine residue via an autocatalytic post-translational modification. Two non-identical subunits are generated from the proenzyme in this reaction, and the pyruvate is formed at the N-terminus of the alpha chain, which is derived from the carboxyl end of the proenzyme. The autoendoproteolytic cleavage occurs by a canonical serine protease mechanism, in which the side chain hydroxyl group of the serine supplies its oxygen atom to form the C-terminus of the beta chain, while the remainder of the serine residue undergoes an oxidative deamination to produce ammonia and the pyruvoyl prosthetic group on the alpha chain. During this reaction, the Ser that is part of the protease active site of the proenzyme becomes the pyruvoyl prosthetic group, which constitutes an essential element of the active site of the mature decarboxylase.

It is found in the cell membrane. The enzyme catalyses a 1,2-diacyl-sn-glycero-3-phospho-L-serine + H(+) = a 1,2-diacyl-sn-glycero-3-phosphoethanolamine + CO2. It participates in phospholipid metabolism; phosphatidylethanolamine biosynthesis; phosphatidylethanolamine from CDP-diacylglycerol: step 2/2. Functionally, catalyzes the formation of phosphatidylethanolamine (PtdEtn) from phosphatidylserine (PtdSer). The sequence is that of Phosphatidylserine decarboxylase proenzyme from Geobacillus kaustophilus (strain HTA426).